A 262-amino-acid polypeptide reads, in one-letter code: Ubiquitin thioesterase otubain-like (262 aa).

One can recognise an OTU domain in the interval 64–262; the sequence is KFIRRTRPDG…PGHYDILYPN (199 aa). Residue aspartate 72 is part of the active site. Cysteine 75 functions as the Nucleophile in the catalytic mechanism. Residue isoleucine 168 coordinates substrate. Histidine 255 is an active-site residue.

This sequence belongs to the peptidase C65 family.

The enzyme catalyses Thiol-dependent hydrolysis of ester, thioester, amide, peptide and isopeptide bonds formed by the C-terminal Gly of ubiquitin (a 76-residue protein attached to proteins as an intracellular targeting signal).. In terms of biological role, possible hydrolase that can remove conjugated ubiquitin from proteins in vitro and may therefore play an important regulatory role at the level of protein turnover by preventing degradation. The chain is Ubiquitin thioesterase otubain-like from Drosophila melanogaster (Fruit fly).